The primary structure comprises 321 residues: uncharacterized protein (321 aa).

The Exonuclease domain occupies 130 to 314 (NLVYDLETTG…NDVDALIKIM (185 aa)).

This is an uncharacterized protein from Acanthamoeba polyphaga (Amoeba).